Consider the following 357-residue polypeptide: Alanine racemase (357 aa).

Catalysis depends on Lys35, which acts as the Proton acceptor; specific for D-alanine. Position 35 is an N6-(pyridoxal phosphate)lysine (Lys35). Arg130 serves as a coordination point for substrate. Tyr253 (proton acceptor; specific for L-alanine) is an active-site residue. Met302 is a binding site for substrate.

The protein belongs to the alanine racemase family. Pyridoxal 5'-phosphate serves as cofactor.

It catalyses the reaction L-alanine = D-alanine. Its pathway is amino-acid biosynthesis; D-alanine biosynthesis; D-alanine from L-alanine: step 1/1. Functionally, catalyzes the interconversion of L-alanine and D-alanine. May also act on other amino acids. This is Alanine racemase (alr) from Wigglesworthia glossinidia brevipalpis.